Consider the following 122-residue polypeptide: Large ribosomal subunit protein uL14 (122 aa).

This sequence belongs to the universal ribosomal protein uL14 family. In terms of assembly, part of the 50S ribosomal subunit. Forms a cluster with proteins L3 and L19. In the 70S ribosome, L14 and L19 interact and together make contacts with the 16S rRNA in bridges B5 and B8.

Binds to 23S rRNA. Forms part of two intersubunit bridges in the 70S ribosome. The sequence is that of Large ribosomal subunit protein uL14 from Oenococcus oeni (strain ATCC BAA-331 / PSU-1).